Reading from the N-terminus, the 645-residue chain is MNQMQPYADVHQPHMSTAAHAPASGPPAGLSHYSYPHQPSMMQPQQQQHQYGGQPTGYPYAYNNGVPSQLPASSSMNNALVPSTLQLPAMSAGAPNSSMPGSQSYQSHTFDHTGQVAPPGMKPRVTATLWEDEGSLCFQVEAKGVCVARREDNHMINGTKLLNVAGMTRGRRDGILKSEKTRHVVKIGPMHLKGVWIPFERALEFANKEKITEQLYPLFVHDIGALLYHPSNQTRASVGGAAMAAVDRNRRPDSMQTQQRYMAGPTTSQAPSLHHHHSMTNSVGSAMSQPPHAIQPHPSSGRPSLDRAHTFPTPPTSASSMMGMGNQGSSYEWNGANVQQHPQGNQPLSIDTGLSNARSVPTTPASTPPGAVQQGIPYGSSQSYDGSRPMYSAPPAQPSQYAQGQPMMSYRPDNAYPKTEMAPPSRISDVPEEGEVKASDGMMPQGNEQVAAPPAGGEEENEYTHSSAPYNGNRGPYGYNPNGPPGPMHADHTHLSPEMTGSPHQNGSGRATPRTATNGQAQWGSSYPTPQRQAPPSSNLYNVMSDPRGAPNGNAAHDAYQGPGAVPQYASQGYAPTNGVNSSGKRGRDEEDAETYRPDSVQGDDMGGLKRRKTMEGGAVGQTYAQDPSPGLQRAHTLAAQRARR.

The disordered stretch occupies residues 1–52 (MNQMQPYADVHQPHMSTAAHAPASGPPAGLSHYSYPHQPSMMQPQQQQHQYG). Residues 18–52 (AAHAPASGPPAGLSHYSYPHQPSMMQPQQQQHQYG) are compositionally biased toward low complexity. One can recognise an HTH APSES-type domain in the interval 124 to 230 (RVTATLWEDE…HDIGALLYHP (107 aa)). A DNA-binding region (H-T-H motif) is located at residues 158–179 (GTKLLNVAGMTRGRRDGILKSE). The disordered stretch occupies residues 246 to 645 (VDRNRRPDSM…HTLAAQRARR (400 aa)). 2 stretches are compositionally biased toward polar residues: residues 254-271 (SMQTQQRYMAGPTTSQAP) and 279-288 (MTNSVGSAMS). The span at 317-330 (SASSMMGMGNQGSS) shows a compositional bias: low complexity. Polar residues predominate over residues 336–365 (ANVQQHPQGNQPLSIDTGLSNARSVPTTPA). Positions 469 to 481 (PYNGNRGPYGYNP) are enriched in low complexity. Polar residues-rich tracts occupy residues 502-542 (SPHQ…NLYN) and 569-584 (YASQGYAPTNGVNSSG). Positions 585-613 (KRGRDEEDAETYRPDSVQGDDMGGLKRRK) are nuclear localization domain. Over residues 586–597 (RGRDEEDAETYR) the composition is skewed to basic and acidic residues.

The protein belongs to the EFG1/PHD1/stuA family.

Its subcellular location is the nucleus. In terms of biological role, transcription factor that regulates asexual reproduction. Binds the StuA-response elements (StRE) with the consensus sequence 5'-(A/T)CGCG(T/A)N(A/C)-3' at the promoters of target genes. Regulates the expression of several effector genes (AvrLm1, AvrLm6 and AvrLm4-7) during infection stage. In Leptosphaeria maculans (strain JN3 / isolate v23.1.3 / race Av1-4-5-6-7-8) (Blackleg fungus), this protein is Cell pattern formation-associated protein stuA.